Reading from the N-terminus, the 228-residue chain is 7-cyano-7-deazaguanine synthase (228 aa).

7-17 (LSGGMDSLVTT) serves as a coordination point for ATP. Positions 187, 195, 198, and 201 each coordinate Zn(2+).

It belongs to the QueC family. Zn(2+) is required as a cofactor.

The enzyme catalyses 7-carboxy-7-deazaguanine + NH4(+) + ATP = 7-cyano-7-deazaguanine + ADP + phosphate + H2O + H(+). The protein operates within purine metabolism; 7-cyano-7-deazaguanine biosynthesis. In terms of biological role, catalyzes the ATP-dependent conversion of 7-carboxy-7-deazaguanine (CDG) to 7-cyano-7-deazaguanine (preQ(0)). In Chlorobium chlorochromatii (strain CaD3), this protein is 7-cyano-7-deazaguanine synthase.